A 450-amino-acid polypeptide reads, in one-letter code: VGFKAGVKEYKLTYYTPDYETKDTDILAAFRVTPQPGVPPEEAGAAVAAESSTGTWTTVWTDGLTSLDRYKGRCYHIEPVAGEENQFIAYVAYPLDLFEEGSVTNMFTSIVGNVFGFKALRALRLEDLRIPVAYVKTFQGPPHGIQVERDKLNKYGRPLLGCTIKPKLGLSAKNYGRAVYECLRGGLDFTKDDENVNSQPFMRWRDRFLFCAEAIYKSQAETGEIKGHYLNATAGTCEEMMKRAVFARELGVPIVMHDYLTGGFTANTSLAHYCRDNGLLLHIHRAMHAVIDRQKNHGIHFRVLAKALRMSGGDHIHSGTVVGKLEGERDITLGFVDLLRDDFIEKDRSRGIYFTQDWVSLPGVLPVASGGIHVWHMPALTEIFGDDSVLQFGGGTLGHPWGNAPGAVANRVALEACVQARNEGRDLAREGNEIIREACKWSPELAAACE.

At Lys-4 the chain carries N6,N6,N6-trimethyllysine. Substrate is bound by residues Asn-113 and Thr-163. Lys-165 functions as the Proton acceptor in the catalytic mechanism. Position 167 (Lys-167) interacts with substrate. Positions 191, 193, and 194 each coordinate Mg(2+). Position 191 is an N6-carboxylysine (Lys-191). The active-site Proton acceptor is the His-284. Positions 285, 317, and 369 each coordinate substrate.

The protein belongs to the RuBisCO large chain family. Type I subfamily. In terms of assembly, heterohexadecamer of 8 large chains and 8 small chains; disulfide-linked. The disulfide link is formed within the large subunit homodimers. The cofactor is Mg(2+). In terms of processing, the disulfide bond which can form in the large chain dimeric partners within the hexadecamer appears to be associated with oxidative stress and protein turnover.

The protein localises to the plastid. Its subcellular location is the chloroplast. The enzyme catalyses 2 (2R)-3-phosphoglycerate + 2 H(+) = D-ribulose 1,5-bisphosphate + CO2 + H2O. It carries out the reaction D-ribulose 1,5-bisphosphate + O2 = 2-phosphoglycolate + (2R)-3-phosphoglycerate + 2 H(+). RuBisCO catalyzes two reactions: the carboxylation of D-ribulose 1,5-bisphosphate, the primary event in carbon dioxide fixation, as well as the oxidative fragmentation of the pentose substrate in the photorespiration process. Both reactions occur simultaneously and in competition at the same active site. In Sedum rubrotinctum (Jelly bean plant), this protein is Ribulose bisphosphate carboxylase large chain.